Consider the following 231-residue polypeptide: Ion-translocating oxidoreductase complex subunit E (231 aa).

6 helical membrane passes run 18 to 38, 39 to 59, 63 to 83, 86 to 106, 125 to 145, and 182 to 202; these read ALVQ…ATNA, LGLG…ISTL, TPAE…VSAV, LINA…PLIV, ALSA…MFVL, and PFLL…MLAG.

The protein belongs to the NqrDE/RnfAE family. In terms of assembly, the complex is composed of six subunits: RsxA, RsxB, RsxC, RsxD, RsxE and RsxG.

It localises to the cell inner membrane. Its function is as follows. Part of a membrane-bound complex that couples electron transfer with translocation of ions across the membrane. Required to maintain the reduced state of SoxR. This is Ion-translocating oxidoreductase complex subunit E from Escherichia coli O1:K1 / APEC.